Reading from the N-terminus, the 241-residue chain is GTP cyclohydrolase 1 (241 aa).

Residues 1–11 (MEKPRGVRCTN) constitute a propeptide that is removed on maturation. A disordered region spans residues 1 to 58 (MEKPRGVRCTNGFPERELPRPGASRPAEKSRPPEAKGAQPADAWKAGRPRSEEDNELN). 2 positions are modified to phosphoserine: serine 51 and serine 72. The Zn(2+) site is built by cysteine 132, histidine 135, and cysteine 203.

This sequence belongs to the GTP cyclohydrolase I family. Toroid-shaped homodecamer, composed of two pentamers of five dimers. Interacts with AHSA1 and GCHFR/GFRP. Post-translationally, phosphorylated.

The protein resides in the cytoplasm. Its subcellular location is the nucleus. The catalysed reaction is GTP + H2O = 7,8-dihydroneopterin 3'-triphosphate + formate + H(+). The protein operates within cofactor biosynthesis; 7,8-dihydroneopterin triphosphate biosynthesis; 7,8-dihydroneopterin triphosphate from GTP: step 1/1. With respect to regulation, GTP shows a positive allosteric effect, and tetrahydrobiopterin inhibits the enzyme activity. Zinc is required for catalytic activity. Inhibited by Mg(2+). May positively regulate nitric oxide synthesis in endothelial cells. May be involved in dopamine synthesis. May modify pain sensitivity and persistence. This chain is GTP cyclohydrolase 1 (Gch1), found in Rattus norvegicus (Rat).